The sequence spans 250 residues: Putative ABC transporter ATP-binding protein YjkB (250 aa).

An ABC transporter domain is found at 13–245 (ISFRSVRKSY…PQHEAAKEFL (233 aa)). 49-56 (GPSGSGKS) serves as a coordination point for ATP.

Belongs to the ABC transporter superfamily.

The sequence is that of Putative ABC transporter ATP-binding protein YjkB (yjkB) from Bacillus subtilis (strain 168).